We begin with the raw amino-acid sequence, 147 residues long: Large ribosomal subunit protein uL13 (147 aa).

Belongs to the universal ribosomal protein uL13 family. As to quaternary structure, part of the 50S ribosomal subunit.

This protein is one of the early assembly proteins of the 50S ribosomal subunit, although it is not seen to bind rRNA by itself. It is important during the early stages of 50S assembly. The polypeptide is Large ribosomal subunit protein uL13 (Micrococcus luteus (strain ATCC 4698 / DSM 20030 / JCM 1464 / CCM 169 / CCUG 5858 / IAM 1056 / NBRC 3333 / NCIMB 9278 / NCTC 2665 / VKM Ac-2230) (Micrococcus lysodeikticus)).